The chain runs to 534 residues: CTP synthase (534 aa).

The segment at 1–266 (MKTKFLFITG…DERIIDYLNI (266 aa)) is amidoligase domain. Serine 14 lines the CTP pocket. Residue serine 14 coordinates UTP. Residues 15–20 (SLGKGL) and aspartate 72 contribute to the ATP site. Mg(2+) contacts are provided by aspartate 72 and glutamate 140. CTP is bound by residues 147–149 (DIE), 187–192 (KTKPTQ), and lysine 223. UTP-binding positions include 187-192 (KTKPTQ) and lysine 223. 239–241 (RDV) contributes to the ATP binding site. In terms of domain architecture, Glutamine amidotransferase type-1 spans 291 to 533 (TIAIVGKYVE…VGASLKHHGE (243 aa)). An L-glutamine-binding site is contributed by glycine 353. The active-site Nucleophile; for glutamine hydrolysis is cysteine 380. L-glutamine is bound by residues 381 to 384 (LGMQ), glutamate 404, and arginine 461. Active-site residues include histidine 506 and glutamate 508.

It belongs to the CTP synthase family. As to quaternary structure, homotetramer.

It carries out the reaction UTP + L-glutamine + ATP + H2O = CTP + L-glutamate + ADP + phosphate + 2 H(+). The catalysed reaction is L-glutamine + H2O = L-glutamate + NH4(+). The enzyme catalyses UTP + NH4(+) + ATP = CTP + ADP + phosphate + 2 H(+). It participates in pyrimidine metabolism; CTP biosynthesis via de novo pathway; CTP from UDP: step 2/2. Allosterically activated by GTP, when glutamine is the substrate; GTP has no effect on the reaction when ammonia is the substrate. The allosteric effector GTP functions by stabilizing the protein conformation that binds the tetrahedral intermediate(s) formed during glutamine hydrolysis. Inhibited by the product CTP, via allosteric rather than competitive inhibition. Functionally, catalyzes the ATP-dependent amination of UTP to CTP with either L-glutamine or ammonia as the source of nitrogen. Regulates intracellular CTP levels through interactions with the four ribonucleotide triphosphates. The chain is CTP synthase from Syntrophotalea carbinolica (strain DSM 2380 / NBRC 103641 / GraBd1) (Pelobacter carbinolicus).